Reading from the N-terminus, the 53-residue chain is UPF0391 membrane protein Ent638_0536 (53 aa).

Helical transmembrane passes span 4–24 (WGIIFLVIALIAAALGFGGLA) and 27–47 (AAWAAKLVFVVGIVLFLVSLF).

It belongs to the UPF0391 family.

It is found in the cell membrane. The sequence is that of UPF0391 membrane protein Ent638_0536 from Enterobacter sp. (strain 638).